Consider the following 610-residue polypeptide: UvrABC system protein C (610 aa).

The 79-residue stretch at 16–94 (SQPGVYRMYD…IKLYQPRYNV (79 aa)) folds into the GIY-YIG domain. The 36-residue stretch at 204–239 (DQVLTQLIARMEKASQDLAFEEAARIRDQIQAVRRV) folds into the UVR domain.

It belongs to the UvrC family. In terms of assembly, interacts with UvrB in an incision complex.

The protein resides in the cytoplasm. The UvrABC repair system catalyzes the recognition and processing of DNA lesions. UvrC both incises the 5' and 3' sides of the lesion. The N-terminal half is responsible for the 3' incision and the C-terminal half is responsible for the 5' incision. This is UvrABC system protein C from Salmonella paratyphi C (strain RKS4594).